We begin with the raw amino-acid sequence, 191 residues long: Protein GrpE (191 aa).

Basic and acidic residues-rich tracts occupy residues 1 to 19 and 29 to 42; these read MKDE…EPES and QQGE…EKEC. A disordered region spans residues 1-42; it reads MKDEHNQEHDHLSQKEPESYQKACACKEQQGEEKQEASEKEC.

This sequence belongs to the GrpE family. As to quaternary structure, homodimer.

It localises to the cytoplasm. Its function is as follows. Participates actively in the response to hyperosmotic and heat shock by preventing the aggregation of stress-denatured proteins, in association with DnaK and GrpE. It is the nucleotide exchange factor for DnaK and may function as a thermosensor. Unfolded proteins bind initially to DnaJ; upon interaction with the DnaJ-bound protein, DnaK hydrolyzes its bound ATP, resulting in the formation of a stable complex. GrpE releases ADP from DnaK; ATP binding to DnaK triggers the release of the substrate protein, thus completing the reaction cycle. Several rounds of ATP-dependent interactions between DnaJ, DnaK and GrpE are required for fully efficient folding. The chain is Protein GrpE from Helicobacter pylori (strain HPAG1).